Here is a 310-residue protein sequence, read N- to C-terminus: Phosphoribosylaminoimidazole-succinocarboxamide synthase (310 aa).

This sequence belongs to the SAICAR synthetase family.

It carries out the reaction 5-amino-1-(5-phospho-D-ribosyl)imidazole-4-carboxylate + L-aspartate + ATP = (2S)-2-[5-amino-1-(5-phospho-beta-D-ribosyl)imidazole-4-carboxamido]succinate + ADP + phosphate + 2 H(+). Its pathway is purine metabolism; IMP biosynthesis via de novo pathway; 5-amino-1-(5-phospho-D-ribosyl)imidazole-4-carboxamide from 5-amino-1-(5-phospho-D-ribosyl)imidazole-4-carboxylate: step 1/2. This is Phosphoribosylaminoimidazole-succinocarboxamide synthase from Xanthomonas campestris pv. campestris (strain B100).